The sequence spans 467 residues: Serine/threonine-protein kinase US3 homolog (467 aa).

The disordered stretch occupies residues 64–155 (GPEVAPPART…PAGGVTREEA (92 aa)). Residues 99 to 111 (NERRAATGDEKES) show a composition bias toward basic and acidic residues. Over residues 117–144 (NESESESESESESESGADDGDWDDDDDA) the composition is skewed to acidic residues. The 299-residue stretch at 164-462 (FRIIRRLTPG…AAELLEHPVF (299 aa)) folds into the Protein kinase domain. ATP-binding positions include 170–178 (LTPGSEGRV) and lysine 194. Catalysis depends on aspartate 279, which acts as the Proton acceptor.

Belongs to the protein kinase superfamily. Ser/Thr protein kinase family. Post-translationally, phosphorylated by UL13 homolog; this phosphorylation regulates subsequent phosphorylation of UL31 and UL34 homologs by US3. Autophosphorylated.

It localises to the host cytoplasm. It is found in the host nucleus. It carries out the reaction L-seryl-[protein] + ATP = O-phospho-L-seryl-[protein] + ADP + H(+). It catalyses the reaction L-threonyl-[protein] + ATP = O-phospho-L-threonyl-[protein] + ADP + H(+). Its function is as follows. Multifunctional serine/threonine kinase that plays a role in several processes including egress of virus particles from the nucleus, modulation of the actin cytoskeleton and inhibition of apoptosis. Phosphorylates UL31 and UL34 homologs, two critical regulators of capsid budding from nucleus to endoplasmic reticulum, thereby facilitating virion egress. Modulates and redistributes host components of the nuclear envelope, including LMNA, emerin/EMD and the nuclear matrix protein MATR3. Phosphorylates envelope glycoprotein B (gB), probably to direct it to the cell surface. Promotes virus intracellular spread by restructuring host cell cytoskeleton. Blocks host apoptosis to extend cell survival and allow efficient viral replication. Promotes viral gene expression by phosphorylating host HDAC2 to reduce viral genome silencing. The protein is Serine/threonine-protein kinase US3 homolog of Bos taurus (Bovine).